We begin with the raw amino-acid sequence, 701 residues long: Polyribonucleotide nucleotidyltransferase (701 aa).

Mg(2+)-binding residues include Asp-487 and Asp-493. The 60-residue stretch at 553-612 folds into the KH domain; it reads PRLYTLRINPDKIRDVIGKGGSVIRALTEETGTSIDIAEDGLITIASVSAEGAEEAKRRI. In terms of domain architecture, S1 motif spans 622–692; the sequence is GKIYEGTVVK…ERGRIRLSIK (71 aa).

Belongs to the polyribonucleotide nucleotidyltransferase family. Mg(2+) serves as cofactor.

The protein resides in the cytoplasm. The catalysed reaction is RNA(n+1) + phosphate = RNA(n) + a ribonucleoside 5'-diphosphate. Involved in mRNA degradation. Catalyzes the phosphorolysis of single-stranded polyribonucleotides processively in the 3'- to 5'-direction. The protein is Polyribonucleotide nucleotidyltransferase of Laribacter hongkongensis (strain HLHK9).